The sequence spans 226 residues: Probable septum site-determining protein MinC (226 aa).

This sequence belongs to the MinC family. Interacts with MinD and FtsZ.

In terms of biological role, cell division inhibitor that blocks the formation of polar Z ring septums. Rapidly oscillates between the poles of the cell to destabilize FtsZ filaments that have formed before they mature into polar Z rings. Prevents FtsZ polymerization. This chain is Probable septum site-determining protein MinC, found in Bacillus velezensis (strain DSM 23117 / BGSC 10A6 / LMG 26770 / FZB42) (Bacillus amyloliquefaciens subsp. plantarum).